We begin with the raw amino-acid sequence, 367 residues long: Phosphoribosylaminoimidazole-succinocarboxamide synthase (367 aa).

Belongs to the SAICAR synthetase family.

The catalysed reaction is 5-amino-1-(5-phospho-D-ribosyl)imidazole-4-carboxylate + L-aspartate + ATP = (2S)-2-[5-amino-1-(5-phospho-beta-D-ribosyl)imidazole-4-carboxamido]succinate + ADP + phosphate + 2 H(+). It participates in purine metabolism; IMP biosynthesis via de novo pathway; 5-amino-1-(5-phospho-D-ribosyl)imidazole-4-carboxamide from 5-amino-1-(5-phospho-D-ribosyl)imidazole-4-carboxylate: step 1/2. This is Phosphoribosylaminoimidazole-succinocarboxamide synthase from Shewanella frigidimarina (strain NCIMB 400).